A 513-amino-acid polypeptide reads, in one-letter code: GMP synthase [glutamine-hydrolyzing] (513 aa).

The region spanning 7-198 is the Glutamine amidotransferase type-1 domain; that stretch reads LIVVVDFGGQ…LFNIAGCRGD (192 aa). Cysteine 84 serves as the catalytic Nucleophile. Catalysis depends on residues histidine 172 and glutamate 174. A GMPS ATP-PPase domain is found at 199–388; sequence WTTESFITRQ…LGVPEEIVGR (190 aa). An ATP-binding site is contributed by 226 to 232; sequence SGGVDSS.

As to quaternary structure, homodimer.

The enzyme catalyses XMP + L-glutamine + ATP + H2O = GMP + L-glutamate + AMP + diphosphate + 2 H(+). Its pathway is purine metabolism; GMP biosynthesis; GMP from XMP (L-Gln route): step 1/1. Functionally, catalyzes the synthesis of GMP from XMP. The protein is GMP synthase [glutamine-hydrolyzing] of Symbiobacterium thermophilum (strain DSM 24528 / JCM 14929 / IAM 14863 / T).